The following is a 292-amino-acid chain: MSRNYEKLSIEEFGAHLLGTVDLDPIYLALRRMELPEAQLNRWLLAYWCLYNGGEASYLSEFEGREFFEMLNHAAENVREAPIGGRWPRGAERRHWRGAQATSSVEYLIDRYDDRPEDMAAYCAGQGGTFLEVTKRVQEHRLFGPWIGFKVADMVDRVLGKPVSFDNAAVFMFKDPYKAACIQYEVNPNIPDHVLADGSVAPRNRELVTPETVHHVAQHLIEHFKGFQAPPLGDRPVNIQEVETILCKWKSHQNGHYPLFKDIVEIREAALPWAKVSKTAQAFFEAMPEVTQ.

The protein belongs to the thymidine aminotransferase family.

It catalyses the reaction 5-phosphomethyl-dUMP in DNA + glycine = 5-N(alpha)-glycyl-dTMP in DNA + phosphate. Its function is as follows. Transfers glycine to 5-phosphomethyl-2'-deoxyuridine (5-PmdU) to produce 5-Nalpha-glycinylthymidine (Nalpha-GlyT) on DNA as a step in the pathway leading to thymidine hypermodifications in the viral genome. As a final result of the pathway of hypermodification, 5-acetylaminomethyl-2'-deoxyuridine (5-AcNmdU) substitutes for a subset of thymidines in the viral DNA. These modifications probably prevent degradation of viral genome by the host restriction-modification antiviral defense system. The polypeptide is Glycinyltransferase (Pseudomonas phage PaMx11).